The following is an 88-amino-acid chain: Small ribosomal subunit protein bS20 (88 aa).

The protein belongs to the bacterial ribosomal protein bS20 family.

In terms of biological role, binds directly to 16S ribosomal RNA. The chain is Small ribosomal subunit protein bS20 from Clostridium acetobutylicum (strain ATCC 824 / DSM 792 / JCM 1419 / IAM 19013 / LMG 5710 / NBRC 13948 / NRRL B-527 / VKM B-1787 / 2291 / W).